A 339-amino-acid polypeptide reads, in one-letter code: Uracil nucleotide/cysteinyl leukotriene receptor (339 aa).

Over 1–36 (MNGLEAALPSLTDNSSLAYSEQCGQETPLENMLFAC) the chain is Extracellular. A glycan (N-linked (GlcNAc...) asparagine) is linked at N14. The helical transmembrane segment at 37–57 (FYLLDFILAFVGNALALWLFI) threads the bilayer. Topologically, residues 58–64 (WDHKSGT) are cytoplasmic. A helical transmembrane segment spans residues 65-85 (PANVFLMHLAVADLSCVLVLP). Over 86–105 (TRLVYHFSGNHWPFGEIPCR) the chain is Extracellular. A disulfide bond links C104 and C181. The helical transmembrane segment at 106–126 (LTGFLFYLNMYASIYFLTCIS) threads the bilayer. The Cytoplasmic segment spans residues 127-147 (ADRFLAIVHPVKSLKLRRPLY). A helical transmembrane segment spans residues 148-168 (AHLACAFLWIVVAVAMAPLLV). Topologically, residues 169 to 195 (SPQTVQTNHTVVCLQLYREKASHHALA) are extracellular. N176 carries an N-linked (GlcNAc...) asparagine glycan. The chain crosses the membrane as a helical span at residues 196–216 (SLAVAFTFPFITTVTCYLLII). Residues 217 to 232 (RSLRQGPRIEKHLKNK) are Cytoplasmic-facing. The helical transmembrane segment at 233–253 (AVRMIAMVLAIFLICFVPYHI) threads the bilayer. Topologically, residues 254-280 (HRSVYVLHYRGGGTSCAAQRALALGNR) are extracellular. A helical membrane pass occupies residues 281-301 (ITSCLTSLNGALDPVMYFFVA). Residues 302 to 339 (EKFRHALCNLLCSKRLTGPPPSFEGKTNESSLSARSEL) lie on the Cytoplasmic side of the membrane.

The protein belongs to the G-protein coupled receptor 1 family.

It is found in the cell membrane. Its function is as follows. Dual specificity receptor for uracil nucleotides and cysteinyl leukotrienes (CysLTs). Signals through G(i) and inhibition of adenylyl cyclase. May mediate brain damage by nucleotides and CysLTs following ischemia. The protein is Uracil nucleotide/cysteinyl leukotriene receptor of Mus musculus (Mouse).